We begin with the raw amino-acid sequence, 441 residues long: GPI mannosyltransferase 2 (441 aa).

10 helical membrane passes run 4–24, 35–55, 115–135, 143–163, 165–185, 199–223, 249–269, 306–326, 361–381, and 418–438; these read MTVLSPSAGSQSACSLGLILV, ILFGLWKALIFLVIVICPGLG, LLALLASVLVLYRLSVNIFGG, LCFLSAALHIISPAGAFLSAP, GEALFSLLNISGLYLYSSSVL, LLAAAVLISAATAVRSNGILGGVLF, VIVLGGCVIALGMAVPQYIAF, YWVVPNIPLFLLAMPILALLL, LAIIQALLAVLAFTSYHVQII, and VAVQAIMIYGLIHAVLFGSFL.

Belongs to the PIGV family.

It is found in the endoplasmic reticulum membrane. It participates in glycolipid biosynthesis; glycosylphosphatidylinositol-anchor biosynthesis. Functionally, mannosyltransferase involved in glycosylphosphatidylinositol-anchor biosynthesis. Transfers the second mannose to the glycosylphosphatidylinositol during GPI precursor assembly. This Aspergillus fumigatus (strain ATCC MYA-4609 / CBS 101355 / FGSC A1100 / Af293) (Neosartorya fumigata) protein is GPI mannosyltransferase 2 (gpi18).